A 216-amino-acid chain; its full sequence is Movement and silencing protein TGBp1 (216 aa).

Residues methionine 1–cysteine 110 enclose the (+)RNA virus helicase ATP-binding domain. Residues serine 111–asparagine 216 enclose the (+)RNA virus helicase C-terminal domain.

Belongs to the Tymovirales TGBp1 protein family. In terms of assembly, homodimer and homooligomer. Interacts with capsid protein. Interacts with host AGO1; this interaction targets the host protein for degradation, thereby suppressing the antiviral RNA silencing.

It is found in the host cytoplasm. In terms of biological role, transports viral genome to neighboring plant cells directly through plasmosdesmata, without any budding. The movement protein allows efficient cell to cell propagation, by bypassing the host cell wall barrier. Increases plasmodesma size exclusion limit. Acts as a suppressor of RNA-mediated gene silencing, also known as post-transcriptional gene silencing (PTGS), a mechanism of plant viral defense that limits the accumulation of viral RNAs. This is Movement and silencing protein TGBp1 from Lilium formosanum.